The primary structure comprises 227 residues: ATP-dependent dethiobiotin synthetase BioD (227 aa).

13–18 lines the ATP pocket; that stretch reads EVGKSV. Residue Ser-17 coordinates Mg(2+). Lys-38 is a catalytic residue. Ser-42 provides a ligand contact to substrate. Residues Asp-55, 116–119, and 176–177 contribute to the ATP site; these read EGAG and ND. Mg(2+) contacts are provided by Asp-55 and Glu-116.

Belongs to the dethiobiotin synthetase family. In terms of assembly, homodimer. The cofactor is Mg(2+).

Its subcellular location is the cytoplasm. The catalysed reaction is (7R,8S)-7,8-diammoniononanoate + CO2 + ATP = (4R,5S)-dethiobiotin + ADP + phosphate + 3 H(+). The protein operates within cofactor biosynthesis; biotin biosynthesis; biotin from 7,8-diaminononanoate: step 1/2. Functionally, catalyzes a mechanistically unusual reaction, the ATP-dependent insertion of CO2 between the N7 and N8 nitrogen atoms of 7,8-diaminopelargonic acid (DAPA, also called 7,8-diammoniononanoate) to form a ureido ring. This chain is ATP-dependent dethiobiotin synthetase BioD, found in Serratia marcescens.